The sequence spans 1130 residues: 3-hydroxy-3-methylglutaryl-coenzyme A reductase 1 (1130 aa).

Topologically, residues 1 to 46 are cytoplasmic; the sequence is MATSLITRKLRSAEATNDVEPGWLKRQVTGVLQSISSHACQHPIHT. The chain crosses the membrane as a helical span at residues 47–67; the sequence is IVVIALLASTTYVGLLEGSLF. Over 68–242 the chain is Lumenal; it reads DSVRNSRNIA…DLIKHAETID (175 aa). The N-linked (GlcNAc...) asparagine glycan is linked to asparagine 148. The 174-residue stretch at 242 to 415 folds into the SSD domain; the sequence is DIVIMTLGYL…FTFYTTILCI (174 aa). The helical transmembrane segment at 243–263 threads the bilayer; sequence IVIMTLGYLSMHLSFVSLFFS. Residues 264-270 lie on the Cytoplasmic side of the membrane; the sequence is MRRLGSN. The helical transmembrane segment at 271–291 threads the bilayer; it reads FWLAATVLFSGVFAFLFGLLV. Residues 292-296 lie on the Lumenal side of the membrane; sequence TTKLG. Residues 297 to 317 form a helical membrane-spanning segment; sequence VPINVLLLSEGLPFLVVTIGF. Over 318 to 366 the chain is Cytoplasmic; it reads EKPIILTRAVLTAAADNRGRAGQASSSTTKSIQDSIQTAIKEQGFEIIR. The helical transmembrane segment at 367 to 387 threads the bilayer; that stretch reads DYCIEIAILIAGAASGVQGGL. Topologically, residues 388-389 are lumenal; that stretch reads RQ. Residues 390–410 form a helical membrane-spanning segment; it reads FCFLAAWILFFDCVLLFTFYT. The Cytoplasmic portion of the chain corresponds to 411-476; that stretch reads TILCIKLEIN…RKLRSSSVRR (66 aa). The helical transmembrane segment at 477 to 497 threads the bilayer; it reads FKILMVGGFVLVNVVNLSTIP. Over 498 to 601 the chain is Lumenal; it reads FRDSSQGAGL…ESLLKSIEDP (104 aa). Residues 602-622 form a helical membrane-spanning segment; it reads IISKWIIAALTLSIILNGYLF. At 623–1130 the chain is on the cytoplasmic side; sequence NAARWSIKEP…ARGLTMSSSE (508 aa). The active-site Charge relay system is glutamate 792. 798-804 is a binding site for CoA; it reads STSRGAK. NADP(+)-binding positions include 859-861 and 886-894; these read SRF and DAMGMNMIS. The active-site Charge relay system is the lysine 926. Position 955–957 (955–957) interacts with CoA; that stretch reads VLK. Aspartate 1002 functions as the Charge relay system in the catalytic mechanism. A CoA-binding site is contributed by 1097–1098; it reads AH. Histidine 1098 functions as the Proton donor in the catalytic mechanism. 1102-1103 is an NADP(+) binding site; the sequence is NR. Low complexity predominate over residues 1103-1122; sequence RSAATTRTSTPVSAAVSAAR. The tract at residues 1103 to 1130 is disordered; that stretch reads RSAATTRTSTPVSAAVSAARGLTMSSSE.

Belongs to the HMG-CoA reductase family.

It is found in the endoplasmic reticulum membrane. The enzyme catalyses (R)-mevalonate + 2 NADP(+) + CoA = (3S)-3-hydroxy-3-methylglutaryl-CoA + 2 NADPH + 2 H(+). Its pathway is metabolic intermediate biosynthesis; (R)-mevalonate biosynthesis; (R)-mevalonate from acetyl-CoA: step 3/3. In terms of biological role, HMG-CoA reductase; part of the first module of ergosterol biosynthesis pathway that includes the early steps of the pathway, conserved across all eukaryotes, and which results in the formation of mevalonate from acetyl-coenzyme A (acetyl-CoA). Hmg1 and hmg2 catalyze the reduction of hydroxymethylglutaryl-CoA (HMG-CoA) to mevalonate. The first module starts with the action of the cytosolic acetyl-CoA acetyltransferase erg10B that catalyzes the formation of acetoacetyl-CoA. The hydroxymethylglutaryl-CoA synthases erg13A and erg13B then condense acetyl-CoA with acetoacetyl-CoA to form HMG-CoA. The rate-limiting step of the early module is the reduction to mevalonate by the 3-hydroxy-3-methylglutaryl-coenzyme A (HMG-CoA) reductases hmg1 and hmg2. Mevalonate is also a precursor for the extracellular siderophore triacetylfusarinine C (TAFC). The sequence is that of 3-hydroxy-3-methylglutaryl-coenzyme A reductase 1 from Aspergillus fumigatus (strain ATCC MYA-4609 / CBS 101355 / FGSC A1100 / Af293) (Neosartorya fumigata).